The sequence spans 199 residues: Recombination protein RecR (199 aa).

A C4-type zinc finger spans residues 57–72; the sequence is CAECRTFTEEEVCHIC. One can recognise a Toprim domain in the interval 81-176; sequence GQICVVESPA…EASRIAHGVP (96 aa).

Belongs to the RecR family.

In terms of biological role, may play a role in DNA repair. It seems to be involved in an RecBC-independent recombinational process of DNA repair. It may act with RecF and RecO. The sequence is that of Recombination protein RecR from Vibrio parahaemolyticus serotype O3:K6 (strain RIMD 2210633).